The sequence spans 579 residues: Probable zinc metalloprotease EGY1, chloroplastic (579 aa).

Disordered regions lie at residues 1–42 (MAAA…PASA) and 78–146 (GGGG…NEPP). The transit peptide at 1–44 (MAAAAAALASSPMVHLTASRLRLPRPARSPAAATPSPSPASAAC) directs the protein to the chloroplast. Low complexity predominate over residues 16–42 (LTASRLRLPRPARSPAAATPSPSPASA). Gly residues predominate over residues 78-92 (GGGGGGGGGGGGTGG). Composition is skewed to low complexity over residues 104–115 (AAAAEAKVGGAV) and 125–137 (SGSF…SSSG). 8 helical membrane-spanning segments follow: residues 272-292 (YVIS…LGIA), 321-341 (LLPF…IQLF), 357-377 (LSIP…ITQF), 392-412 (MAGP…GLLL), 419-439 (ASDL…LGLV), 452-472 (ATVA…TTAF), 505-525 (LLGL…YVLI), and 547-567 (AALI…WDEL).

It belongs to the peptidase M50B family.

It is found in the plastid. It localises to the chloroplast membrane. Probable membrane-associated metalloprotease that may be involved in chloroplast development. This Oryza sativa subsp. japonica (Rice) protein is Probable zinc metalloprotease EGY1, chloroplastic (EGY1).